The sequence spans 538 residues: Phosphoenolpyruvate carboxykinase (ATP) (538 aa).

Substrate is bound by residues Arg64, Tyr205, and Lys211. ATP contacts are provided by residues Lys211, His230, and 246-254; that span reads GLSGTGKTT. Residues Lys211 and His230 each contribute to the Mn(2+) site. Asp267 provides a ligand contact to Mn(2+). Residues Glu295, Arg331, 447–448, and Thr453 each bind ATP; that span reads RI. A substrate-binding site is contributed by Arg331.

This sequence belongs to the phosphoenolpyruvate carboxykinase (ATP) family. Monomer. Mn(2+) serves as cofactor.

Its subcellular location is the cytoplasm. The enzyme catalyses oxaloacetate + ATP = phosphoenolpyruvate + ADP + CO2. It functions in the pathway carbohydrate biosynthesis; gluconeogenesis. Involved in the gluconeogenesis. Catalyzes the conversion of oxaloacetate (OAA) to phosphoenolpyruvate (PEP) through direct phosphoryl transfer between the nucleoside triphosphate and OAA. This is Phosphoenolpyruvate carboxykinase (ATP) from Haemophilus influenzae (strain 86-028NP).